The chain runs to 3329 residues: Breast cancer type 2 susceptibility protein homolog (3329 aa).

The segment at 1-40 (MPVEYKRRPTFWEIFKARCSTADLGPISLNWFEELSSEAP) is interaction with PALB2. 2 disordered regions span residues 37–69 (SEAPPYNSEPPEESEYKPHGYEPQLFKTPQRNP) and 207–241 (EARSSVTPADSPATLKSCFSNHNESPQKNDRSVPS). Phosphoserine occurs at positions 435 and 481. Residues 628 to 650 (PDSSDKKRCLPNDPEEPSLTNSF) are disordered. The interval 628-979 (PDSSDKKRCL…DKWSEFLDPV (352 aa)) is interaction with NPM1. S735 bears the Phosphoserine mark. A compositionally biased stretch (basic and acidic residues) spans 934 to 953 (EKSRNNIEQHQKGTEDKDFK). The interval 934–965 (EKSRNNIEQHQKGTEDKDFKSNSSLNMKSDGN) is disordered. Polar residues predominate over residues 954–965 (SNSSLNMKSDGN). 2 BRCA2 repeats span residues 981–1015 (NHNFGGSFRTASNKEIKLSEHNVKKSKMFFKDIEE) and 1192–1226 (NEMEFGGFCSALGTKLSVSNEALRKAMKLFSDIEN). The interaction with RAD51 stretch occupies residues 982–2035 (HNFGGSFRTA…LHKVKGMLEE (1054 aa)). The tract at residues 1296–1340 (NTKHEDSYTSSQRNNLENSDGSMSSTSGPVYIHKGDSDLPADQGS) is disordered. Residues 1303 to 1323 (YTSSQRNNLENSDGSMSSTSG) are compositionally biased toward polar residues. BRCA2 repeat units lie at residues 1394-1428 (IKEFNISFQTASGKNTRVSKESLNKSVNIFNRETD), 1491-1525 (KEPTLLSFHTASGKKVKIMQESLDKVKNLFDETQY), 1623-1657 (TEDSALAYYTEDSRKTCVRESSLSKGRKWLREQGD), 1924-1958 (PSRTYGIFSTASGKAIQVSDASLEKARQVFSEMDG), and 2004-2038 (NSSVFSGFSTAGGKLVTVSESALHKVKGMLEEFDL). S2048 bears the Phosphoserine mark. A disordered region spans residues 2073-2099 (NSKLQKTYNDKSSLPSNYKESGSSGNT). Residues 2074–2099 (SKLQKTYNDKSSLPSNYKESGSSGNT) show a composition bias toward polar residues. The tract at residues 2219–2285 (KRGGVTVDAV…EPVTCGPFCS (67 aa)) is interaction with HSF2BP. Residues 2298 to 2466 (TSPAQELLSK…SPKQLYIYGV (169 aa)) form an interaction with FANCD2 region. The segment at 2361 to 2393 (FHGDEHFNSKNVNLEGKNQKSTDGDREDGNDSH) is disordered. Residues 2377 to 2393 (KNQKSTDGDREDGNDSH) show a composition bias toward basic and acidic residues. The interaction with SEM1 stretch occupies residues 2402-2753 (MSSLQSARDL…QRVYPLQWVE (352 aa)). The short motif at 2603 to 2619 (AAKTLVLCISDIISPST) is the Nuclear export signal; masked by interaction with SEM1 element. S3214 bears the Phosphoserine; by CDK1 and CDK2 mark. Disordered regions lie at residues 3221–3257 (FQPPRSCGTKYATPIKKEPSSPRRRTPFQKTSGVSLP) and 3273–3329 (QALT…AVES). A Phosphoserine modification is found at S3241. Positions 3309 to 3329 (SRKESLRDCRGDSSEKLAVES) are enriched in basic and acidic residues.

In terms of assembly, monomer and dimer. Interacts with RAD51; regulates RAD51 recruitment and function at sites of DNA repair. Interacts with SEM1, WDR16, USP11, DMC1, ROCK2 and NPM1. Interacts with both nonubiquitinated and monoubiquitinated FANCD2; this complex also includes XRCC3 and phosphorylated FANCG. Part of a BRCA complex containing BRCA1, BRCA2 and PALB2. Component of the homologous recombination repair (HR) complex composed of ERCC5/XPG, BRCA2, PALB2, DSS1 and RAD51. Within the complex, interacts with ERCC5/XPG and PALB2. Interacts directly with PALB2 which may serve as a scaffold for a HR complex containing PALB2, BRCA2, RAD51C, RAD51 and XRCC3. Interacts with BRCA1 only in the presence of PALB2 which serves as the bridging protein. Interacts with POLH; the interaction is direct. Interacts with the TREX-2 complex subunits PCID2 and SEM1. Interacts with HSF2BP and BRME1; the interaction with HSF2BP is direct and allows the formation of a ternary complex. The complex BRME1:HSF2BP:BRCA2 interacts with SPATA22, MEIOB and RAD51. Post-translationally, phosphorylated by ATM upon irradiation-induced DNA damage. Phosphorylation by CHEK1 and CHEK2 regulates interaction with RAD51. Phosphorylation at Ser-3291 by CDK1 and CDK2 is low in S phase when recombination is active, but increases as cells progress towards mitosis; this phosphorylation prevents homologous recombination-dependent repair during S phase and G2 by inhibiting RAD51 binding. In terms of processing, ubiquitinated in the absence of DNA damage; this does not lead to proteasomal degradation. In contrast, ubiquitination in response to DNA damage leads to proteasomal degradation. As to expression, widely expressed. Highest expression in cerebellum, testis, ileum, appendix, epididymis, ovary and mammary gland. No expression in lung.

Its subcellular location is the nucleus. It is found in the cytoplasm. It localises to the cytoskeleton. The protein localises to the microtubule organizing center. The protein resides in the centrosome. Involved in double-strand break repair and/or homologous recombination. Binds RAD51 and potentiates recombinational DNA repair by promoting assembly of RAD51 onto single-stranded DNA (ssDNA). Acts by targeting RAD51 to ssDNA over double-stranded DNA, enabling RAD51 to displace replication protein-A (RPA) from ssDNA and stabilizing RAD51-ssDNA filaments by blocking ATP hydrolysis. Part of a PALB2-scaffolded HR complex containing RAD51C and which is thought to play a role in DNA repair by HR. May participate in S phase checkpoint activation. Binds selectively to ssDNA, and to ssDNA in tailed duplexes and replication fork structures. May play a role in the extension step after strand invasion at replication-dependent DNA double-strand breaks; together with PALB2 is involved in both POLH localization at collapsed replication forks and DNA polymerization activity. In concert with NPM1, regulates centrosome duplication. Interacts with the TREX-2 complex (transcription and export complex 2) subunits PCID2 and SEM1, and is required to prevent R-loop-associated DNA damage and thus transcription-associated genomic instability, independently of its known role in homologous recombination. The chain is Breast cancer type 2 susceptibility protein homolog from Mus musculus (Mouse).